We begin with the raw amino-acid sequence, 446 residues long: Na(+)/H(+) antiporter NhaA (446 aa).

The next 11 membrane-spanning stretches (helical) occupy residues 23–43, 73–93, 109–129, 138–158, 167–187, 193–213, 219–239, 314–334, 348–368, 381–401, and 419–439; these read GGML…SPWG, LMTF…GLEI, LLPI…YYFM, GLAI…SLFG, VFLT…IALF, SVNY…GNFF, WFYI…GIHA, MVNY…SLTA, VLAG…WLVI, WVNL…SLFI, and GVIL…QFAL.

The protein belongs to the NhaA Na(+)/H(+) (TC 2.A.33) antiporter family.

It is found in the cell inner membrane. It catalyses the reaction Na(+)(in) + 2 H(+)(out) = Na(+)(out) + 2 H(+)(in). Na(+)/H(+) antiporter that extrudes sodium in exchange for external protons. This Phocaeicola vulgatus (strain ATCC 8482 / DSM 1447 / JCM 5826 / CCUG 4940 / NBRC 14291 / NCTC 11154) (Bacteroides vulgatus) protein is Na(+)/H(+) antiporter NhaA.